A 273-amino-acid chain; its full sequence is Alkaline ceramidase 1 (273 aa).

At 1–36 (MHVPGTRAKMSSIFAYQSSEVDWCESNFQHSELVAE) the chain is on the lumenal side. The Ca(2+) site is built by Asp22, Trp23, Glu25, Asn27, and Glu36. A helical transmembrane segment spans residues 37-57 (FYNTFSNVFFLIFGPLMMFLM). Residues 58–72 (HPYAQKRTRCFYGVS) are Cytoplasmic-facing. 2 consecutive transmembrane segments (helical) span residues 73–93 (VLFM…SFLG) and 94–114 (QLLD…VWLP). His86 is a Zn(2+) binding site. Residues 115 to 126 (RCYFPKFVKGNR) are Cytoplasmic-facing. Residues 127 to 147 (FYFSCLVTITTIISTFLTFVK) form a helical membrane-spanning segment. Topologically, residues 148–149 (PT) are lumenal. Residues 150–167 (VNAYALNSIAIHILYIVR) traverse the membrane as a helical segment. Topologically, residues 168–177 (TEYKKIRDDD) are cytoplasmic. The chain crosses the membrane as a helical span at residues 178-198 (LRHLIAVSVVLWAAALTSWIS). Residues 199–215 (DRVLCSFWQRIHFYYLH) lie on the Lumenal side of the membrane. Positions 215 and 219 each coordinate Zn(2+). The helical transmembrane segment at 216–236 (SIWHVLISITFPYGIVTMALV) threads the bilayer. The Cytoplasmic portion of the chain corresponds to 237 to 273 (DAKYEMPDKTLKVHYWPRDSWVIGLPYVEIQENDKNC).

The protein belongs to the alkaline ceramidase family. Requires Zn(2+) as cofactor. Highly expressed in skin. Weakly or not expressed in other tissues. Expressed by granular layer of interfollicular epidermis, sebaceous glands and infundibulum.

The protein resides in the endoplasmic reticulum membrane. The enzyme catalyses an N-acylsphing-4-enine + H2O = sphing-4-enine + a fatty acid. It carries out the reaction N-tetracosanoyl-sphing-4-enine + H2O = tetracosanoate + sphing-4-enine. It catalyses the reaction an N-acylsphinganine + H2O = sphinganine + a fatty acid. The catalysed reaction is N-(9Z-octadecenoyl)-sphing-4-enine + H2O = sphing-4-enine + (9Z)-octadecenoate. The enzyme catalyses N-(15Z-tetracosenoyl)-sphing-4-enine + H2O = (15Z)-tetracosenoate + sphing-4-enine. It functions in the pathway lipid metabolism; sphingolipid metabolism. Inhibited by sphingosine. Inhibited by Mn(2+), Zn(2+), and Cu(2+) in a dose-dependent manner. Slightly activated by Ca(2+) in a dose-dependent manner. Endoplasmic reticulum ceramidase that catalyzes the hydrolysis of ceramides into sphingosine and free fatty acids at alkaline pH. Ceramides, sphingosine, and its phosphorylated form sphingosine-1-phosphate are bioactive lipids that mediate cellular signaling pathways regulating several biological processes including cell proliferation, apoptosis and differentiation. Exhibits a strong substrate specificity towards the natural stereoisomer of ceramides with D-erythro-sphingosine as a backbone and has a higher activity towards very long-chain unsaturated fatty acids like the C24:1-ceramide. May also hydrolyze dihydroceramides to produce dihydrosphingosine. ACER1 is a skin-specific ceramidase that regulates the levels of ceramides, sphingosine and sphingosine-1-phosphate in the epidermis, mediates the calcium-induced differentiation of epidermal keratinocytes and more generally plays an important role in skin homeostasis. The sequence is that of Alkaline ceramidase 1 from Mus musculus (Mouse).